The following is a 100-amino-acid chain: Phosphoribosyl-ATP pyrophosphatase (100 aa).

The protein belongs to the PRA-PH family.

It is found in the cytoplasm. The enzyme catalyses 1-(5-phospho-beta-D-ribosyl)-ATP + H2O = 1-(5-phospho-beta-D-ribosyl)-5'-AMP + diphosphate + H(+). The protein operates within amino-acid biosynthesis; L-histidine biosynthesis; L-histidine from 5-phospho-alpha-D-ribose 1-diphosphate: step 2/9. This is Phosphoribosyl-ATP pyrophosphatase from Haloquadratum walsbyi (strain DSM 16790 / HBSQ001).